The sequence spans 197 residues: Thymidylate kinase (197 aa).

7-14 provides a ligand contact to ATP; sequence GIDGSGKS.

This sequence belongs to the thymidylate kinase family.

It catalyses the reaction dTMP + ATP = dTDP + ADP. Its function is as follows. Phosphorylation of dTMP to form dTDP in both de novo and salvage pathways of dTTP synthesis. The chain is Thymidylate kinase from Thermotoga sp. (strain RQ2).